The following is a 930-amino-acid chain: Translation initiation factor IF-2 (930 aa).

Low complexity predominate over residues 50-67 (FKPAAAPKVEAKPAAPKV). 2 disordered regions span residues 50-196 (FKPA…RIDF) and 260-346 (EVVP…HELP). Basic and acidic residues-rich tracts occupy residues 68–90 (SAEKKAEKSEPAKPAVAKEEAKP) and 110–125 (FKAEREARAKEQAERR). Positions 129-141 (KGNNRDQQQNGNR) are enriched in low complexity. Composition is skewed to basic and acidic residues over residues 157-172 (RDNRRFNDQAKKEQGQ) and 262-295 (VPEKKEPAVDTRRKKQARPDKNRDDYDHEEDGPR). The segment covering 309 to 318 (NQKNSNWNNN) has biased composition (low complexity). The span at 337-346 (VTERKFHELP) shows a compositional bias: basic and acidic residues. The 168-residue stretch at 432–599 (ERPPVVTIMG…TVLLVAEIQE (168 aa)) folds into the tr-type G domain. Residues 441–448 (GHVDHGKT) form a G1 region. 441-448 (GHVDHGKT) contributes to the GTP binding site. Residues 466–470 (GITQH) are G2. A G3 region spans residues 487 to 490 (DTPG). GTP-binding positions include 487 to 491 (DTPGH) and 541 to 544 (NKID). Positions 541 to 544 (NKID) are G4. Residues 577 to 579 (SAK) are G5.

Belongs to the TRAFAC class translation factor GTPase superfamily. Classic translation factor GTPase family. IF-2 subfamily.

It localises to the cytoplasm. Functionally, one of the essential components for the initiation of protein synthesis. Protects formylmethionyl-tRNA from spontaneous hydrolysis and promotes its binding to the 30S ribosomal subunits. Also involved in the hydrolysis of GTP during the formation of the 70S ribosomal complex. This chain is Translation initiation factor IF-2, found in Streptococcus pneumoniae serotype 19F (strain G54).